A 226-amino-acid polypeptide reads, in one-letter code: Thiamine-phosphate synthase (226 aa).

4-amino-2-methyl-5-(diphosphooxymethyl)pyrimidine is bound by residues 46–50 and Asp83; that span reads QFRDK. Mg(2+) is bound by residues Asp84 and Asp103. A 4-amino-2-methyl-5-(diphosphooxymethyl)pyrimidine-binding site is contributed by Ser122. 149–151 contributes to the 2-[(2R,5Z)-2-carboxy-4-methylthiazol-5(2H)-ylidene]ethyl phosphate binding site; sequence TQS. Lys152 is a 4-amino-2-methyl-5-(diphosphooxymethyl)pyrimidine binding site. 2-[(2R,5Z)-2-carboxy-4-methylthiazol-5(2H)-ylidene]ethyl phosphate is bound by residues Gly181 and 201–202; that span reads IT.

Belongs to the thiamine-phosphate synthase family. Mg(2+) serves as cofactor.

It catalyses the reaction 2-[(2R,5Z)-2-carboxy-4-methylthiazol-5(2H)-ylidene]ethyl phosphate + 4-amino-2-methyl-5-(diphosphooxymethyl)pyrimidine + 2 H(+) = thiamine phosphate + CO2 + diphosphate. The enzyme catalyses 2-(2-carboxy-4-methylthiazol-5-yl)ethyl phosphate + 4-amino-2-methyl-5-(diphosphooxymethyl)pyrimidine + 2 H(+) = thiamine phosphate + CO2 + diphosphate. The catalysed reaction is 4-methyl-5-(2-phosphooxyethyl)-thiazole + 4-amino-2-methyl-5-(diphosphooxymethyl)pyrimidine + H(+) = thiamine phosphate + diphosphate. It participates in cofactor biosynthesis; thiamine diphosphate biosynthesis; thiamine phosphate from 4-amino-2-methyl-5-diphosphomethylpyrimidine and 4-methyl-5-(2-phosphoethyl)-thiazole: step 1/1. Its function is as follows. Condenses 4-methyl-5-(beta-hydroxyethyl)thiazole monophosphate (THZ-P) and 2-methyl-4-amino-5-hydroxymethyl pyrimidine pyrophosphate (HMP-PP) to form thiamine monophosphate (TMP). The chain is Thiamine-phosphate synthase from Haemophilus influenzae (strain PittGG).